Here is a 213-residue protein sequence, read N- to C-terminus: Imidazole glycerol phosphate synthase subunit HisH 1 (213 aa).

In terms of domain architecture, Glutamine amidotransferase type-1 spans 3–213; it reads SVSIVDYGVG…LSIIQQFLQI (211 aa). Residue C81 is the Nucleophile of the active site. Residues H195 and E197 contribute to the active site.

As to quaternary structure, heterodimer of HisH and HisF.

It is found in the cytoplasm. It carries out the reaction 5-[(5-phospho-1-deoxy-D-ribulos-1-ylimino)methylamino]-1-(5-phospho-beta-D-ribosyl)imidazole-4-carboxamide + L-glutamine = D-erythro-1-(imidazol-4-yl)glycerol 3-phosphate + 5-amino-1-(5-phospho-beta-D-ribosyl)imidazole-4-carboxamide + L-glutamate + H(+). It catalyses the reaction L-glutamine + H2O = L-glutamate + NH4(+). The protein operates within amino-acid biosynthesis; L-histidine biosynthesis; L-histidine from 5-phospho-alpha-D-ribose 1-diphosphate: step 5/9. In terms of biological role, IGPS catalyzes the conversion of PRFAR and glutamine to IGP, AICAR and glutamate. The HisH subunit provides the glutamine amidotransferase activity that produces the ammonia necessary to HisF for the synthesis of IGP and AICAR. The chain is Imidazole glycerol phosphate synthase subunit HisH 1 from Legionella pneumophila (strain Paris).